A 396-amino-acid polypeptide reads, in one-letter code: Elongation factor Tu 1 (396 aa).

The tr-type G domain maps to 10–206; the sequence is KPHCNIGTIG…AVDAYIPQPE (197 aa). Residues 19–26 form a G1 region; that stretch reads GHVDHGKT. Residue 19-26 coordinates GTP; it reads GHVDHGKT. Residue Thr26 participates in Mg(2+) binding. The interval 60 to 64 is G2; that stretch reads GITIS. A G3 region spans residues 81–84; sequence DCPG. Residues 81-85 and 136-139 contribute to the GTP site; these read DCPGH and NKCD. Residues 136–139 are G4; that stretch reads NKCD. The segment at 174-176 is G5; sequence SAL.

It belongs to the TRAFAC class translation factor GTPase superfamily. Classic translation factor GTPase family. EF-Tu/EF-1A subfamily. As to quaternary structure, monomer.

Its subcellular location is the cytoplasm. It carries out the reaction GTP + H2O = GDP + phosphate + H(+). Functionally, GTP hydrolase that promotes the GTP-dependent binding of aminoacyl-tRNA to the A-site of ribosomes during protein biosynthesis. This chain is Elongation factor Tu 1, found in Rhodopseudomonas palustris (strain BisB5).